Here is a 293-residue protein sequence, read N- to C-terminus: 4-hydroxy-tetrahydrodipicolinate synthase (293 aa).

Thr45 lines the pyruvate pocket. Tyr133 functions as the Proton donor/acceptor in the catalytic mechanism. Lys161 functions as the Schiff-base intermediate with substrate in the catalytic mechanism. Residue Ile203 coordinates pyruvate.

This sequence belongs to the DapA family. Homotetramer; dimer of dimers.

It localises to the cytoplasm. It catalyses the reaction L-aspartate 4-semialdehyde + pyruvate = (2S,4S)-4-hydroxy-2,3,4,5-tetrahydrodipicolinate + H2O + H(+). The protein operates within amino-acid biosynthesis; L-lysine biosynthesis via DAP pathway; (S)-tetrahydrodipicolinate from L-aspartate: step 3/4. In terms of biological role, catalyzes the condensation of (S)-aspartate-beta-semialdehyde [(S)-ASA] and pyruvate to 4-hydroxy-tetrahydrodipicolinate (HTPA). This is 4-hydroxy-tetrahydrodipicolinate synthase from Aliivibrio fischeri (strain MJ11) (Vibrio fischeri).